The sequence spans 468 residues: Mothers against decapentaplegic homolog 1 (468 aa).

Position 1 is an N-acetylmethionine (Met1). In terms of domain architecture, MH1 spans 12–136 (PAVKRLLGWK…YKRVESPVLP (125 aa)). Zn(2+)-binding residues include Cys64, Cys109, Cys121, and His126. Residues 162–246 (NEPHMPLNAT…DGSQPMDTNM (85 aa)) form a disordered region. A compositionally biased stretch (low complexity) spans 188 to 210 (PNSSYPNSPGSSSSTYPHSPTSS). Over residues 221–232 (DTPPPAYLPPED) the composition is skewed to pro residues. Over residues 237–246 (DGSQPMDTNM) the composition is skewed to polar residues. The 195-residue stretch at 274–468 (WCSIVYYELN…SPHNPISSVS (195 aa)) folds into the MH2 domain. A Phosphothreonine; by MINK1, TNIK and MAP4K4 modification is found at Thr325. The segment at 421-431 (KGWGAEYHRQD) is L3 loop. Ser466 and Ser468 each carry phosphoserine.

This sequence belongs to the dwarfin/SMAD family. In terms of assembly, found in a complex with SMAD4 and YY1. Interacts with HGS, NANOG and ZCCHC12. Upon C-terminus phosphorylation: forms trimers with another SMAD1 and the co-SMAD SMAD4. Interacts with PEBP2-alpha subunit, CREB-binding protein (CBP), p300, SMURF1, SMURF2, USP15 and HOXC8. Associates with ZNF423 or ZNF521 in response to BMP2 leading to activate transcription of BMP target genes. Interacts with SKOR1. Interacts (via MH2 domain) with LEMD3. Binding to LEMD3 results in at least a partial reduction of receptor-mediated phosphorylation. Forms a ternary complex with PSMB4 and OAZ1 before PSMB4 is incorporated into the 20S proteasome. Interacts (via MH2 domain) with FAM83G (via MH2 domain); in a SMAD4-independent manner. Interacts with ZC3H3. Interacts with TMEM119. Interacts (via MH1 and MH2 domains) with ZNF8. Interacts with RANBP3L; the interaction increases when SMAD1 is not phosphorylated and mediates SMAD1 nuclear export. Interacts with EGR1; this interaction inhibits SMAD1 dephosphorylation. Interacts with SMAD6. Interacts with YAP1. Interacts with MTMR4; negatively regulates BMP signaling through SMAD1 dephosphorylation and retention in endosomes. Post-translationally, phosphorylation of the C-terminal SVS motif by BMP type 1 receptor kinase activates SMAD1 by promoting dissociation from the receptor and trimerization with SMAD4. Phosphorylation by ERK2 MAP kinase in response to EGF or HGF prevents SMAD1 nuclear accumulation and transcriptional activity in response to BMP. Dephosphorylation, probably by PPM1A, induces its export from the nucleus to the cytoplasm. Dephosphorylation is inhibited by association with EGR1. Phosphorylation by CDK8/9 creates binding sites for YAP1, and subsequent phosphorylation by GSK3 switches off YAP1 binding and adds binding sites for SMURF1. In terms of processing, ubiquitinated by SMAD-specific E3 ubiquitin ligase SMURF1, leading to its degradation. Monoubiquitinated, leading to prevent DNA-binding. Deubiquitination by USP15 alleviates inhibition and promotes activation of TGF-beta target genes. Dephosphorylation, probably by PPM1A, induces its export from the nucleus to the cytoplasm. Phospho-SMAD1 is ubiquitinated by CHIP leading to disruption of the SMAD1-SMAD4 complex. Ubiquitous; present in liver, lung, stomach and spleen with lower level in heart, testes and skeletal muscle.

The protein resides in the cytoplasm. It is found in the nucleus. Its function is as follows. Transcriptional modulator that plays a role in various cellular processes, including embryonic development, cell differentiation, and tissue homeostasis. Upon BMP ligand binding to their receptors at the cell surface, is phosphorylated by activated type I BMP receptors (BMPRIs) and associates with SMAD4 to form an heteromeric complex which translocates into the nucleus acting as transcription factor. In turn, the hetero-trimeric complex recognizes cis-regulatory elements containing Smad Binding Elements (SBEs) to modulate the outcome of the signaling network. SMAD1/OAZ1/PSMB4 complex mediates the degradation of the CREBBP/EP300 repressor SNIP1. Positively regulates BMP4-induced expression of odontogenic development regulator MSX1 following IPO7-mediated nuclear import. This chain is Mothers against decapentaplegic homolog 1 (Smad1), found in Rattus norvegicus (Rat).